Consider the following 114-residue polypeptide: Histone H3-7 (114 aa).

Residues 1-17 show a composition bias toward basic residues; that stretch reads NTGGKAPRKHIAHKQAK. The disordered stretch occupies residues 1 to 32; that stretch reads NTGGKAPRKHIAHKQAKKSSAAAATGGVKKPH. Low complexity predominate over residues 18-28; sequence KSSAAAATGGV.

The protein belongs to the histone H3 family. In terms of assembly, the nucleosome is a histone octamer containing two molecules each of H2A, H2B, H3 and H4 assembled in one H3-H4 heterotetramer and two H2A-H2B heterodimers. The octamer wraps approximately 147 bp of DNA.

The protein localises to the nucleus. The protein resides in the chromosome. Functionally, core component of nucleosome. Nucleosomes wrap and compact DNA into chromatin, limiting DNA accessibility to the cellular machineries which require DNA as a template. Histones thereby play a central role in transcription regulation, DNA repair, DNA replication and chromosomal stability. DNA accessibility is regulated via a complex set of post-translational modifications of histones, also called histone code, and nucleosome remodeling. The protein is Histone H3-7 (H3-7) of Stylonychia lemnae (Ciliate).